The sequence spans 360 residues: NAD(P)H-quinone oxidoreductase subunit 1, chloroplastic (360 aa).

The next 9 membrane-spanning stretches (helical) occupy residues 27-47 (IWIFVPIFSLVLGIITGVLVI), 98-118 (FSIGPSIAVISILLSYSVIPF), 129-149 (IGIFLWIAISSIAPIGLLMSG), 165-185 (AAQSISYEIPLTLCVLSISLL), 203-223 (FWGWNLWRQPIGFIIFLISSL), 248-268 (YSGIKFGLFYVASYLNLLISS), 269-289 (LFVTVLYLGGWNISIPYISIL), 297-317 (IFGTTIGIFITLAKTYLFLFI), and 340-360 (FLLPISLGNLLLTTSFQLFSL).

This sequence belongs to the complex I subunit 1 family. As to quaternary structure, NDH is composed of at least 16 different subunits, 5 of which are encoded in the nucleus.

Its subcellular location is the plastid. It localises to the chloroplast thylakoid membrane. The catalysed reaction is a plastoquinone + NADH + (n+1) H(+)(in) = a plastoquinol + NAD(+) + n H(+)(out). It carries out the reaction a plastoquinone + NADPH + (n+1) H(+)(in) = a plastoquinol + NADP(+) + n H(+)(out). Functionally, NDH shuttles electrons from NAD(P)H:plastoquinone, via FMN and iron-sulfur (Fe-S) centers, to quinones in the photosynthetic chain and possibly in a chloroplast respiratory chain. The immediate electron acceptor for the enzyme in this species is believed to be plastoquinone. Couples the redox reaction to proton translocation, and thus conserves the redox energy in a proton gradient. This chain is NAD(P)H-quinone oxidoreductase subunit 1, chloroplastic, found in Nasturtium officinale (Watercress).